The chain runs to 369 residues: tRNA/tmRNA (uracil-C(5))-methyltransferase (369 aa).

Residues Gln-190, Tyr-218, Asn-223, Glu-239, and Asp-301 each contribute to the S-adenosyl-L-methionine site. Cys-326 acts as the Nucleophile in catalysis. The Proton acceptor role is filled by Glu-360.

It belongs to the class I-like SAM-binding methyltransferase superfamily. RNA M5U methyltransferase family. TrmA subfamily.

The catalysed reaction is uridine(54) in tRNA + S-adenosyl-L-methionine = 5-methyluridine(54) in tRNA + S-adenosyl-L-homocysteine + H(+). It catalyses the reaction uridine(341) in tmRNA + S-adenosyl-L-methionine = 5-methyluridine(341) in tmRNA + S-adenosyl-L-homocysteine + H(+). Its function is as follows. Dual-specificity methyltransferase that catalyzes the formation of 5-methyluridine at position 54 (m5U54) in all tRNAs, and that of position 341 (m5U341) in tmRNA (transfer-mRNA). This is tRNA/tmRNA (uracil-C(5))-methyltransferase from Vibrio vulnificus (strain YJ016).